Consider the following 101-residue polypeptide: Thrombin-like enzyme okinaxobin-1 (101 aa).

The signal sequence occupies residues 1 to 16; that stretch reads LIRVLANLLILQLSYA. Residues 17–22 constitute a propeptide that is removed on maturation; sequence QKSSEL. Residues 23–101 enclose the Peptidase S1 domain; it reads VIGGDECNIN…PKKKYFFRCR (79 aa). Cysteines 50 and 66 form a disulfide. H65 serves as the catalytic Charge relay system.

It belongs to the peptidase S1 family. Snake venom subfamily. As to quaternary structure, monomer. In terms of processing, glycosylated. Expressed by the venom gland.

It localises to the secreted. With respect to regulation, strongly inactivated by diisopropylfluorophosphate (DFP) and phenylmethanesulfonyl fluoride (PMSF), and to a lesser extent by tosyl-L-lysine chloromethyl ketone (TLCK). Thrombin-like snake venom serine protease that releases specifically fibrinopeptide B from fibrinogen (FGB) to form fibrin clots. Shows a preferential cleavage at Arg-|-Gly bonds in fibrinogen beta chains. Cleaves fibrinogen beta chains preferentially to alpha chains. The polypeptide is Thrombin-like enzyme okinaxobin-1 (Ovophis okinavensis (Ryukyu Island pit viper)).